An 82-amino-acid polypeptide reads, in one-letter code: Cytochrome b559 subunit alpha (82 aa).

Residues 21-35 form a helical membrane-spanning segment; it reads VIHSVTIPSLFIAGW. His23 is a binding site for heme.

The protein belongs to the PsbE/PsbF family. In terms of assembly, heterodimer of an alpha subunit and a beta subunit. PSII is composed of 1 copy each of membrane proteins PsbA, PsbB, PsbC, PsbD, PsbE, PsbF, PsbH, PsbI, PsbJ, PsbK, PsbL, PsbM, PsbT, PsbX, PsbY, PsbZ, Psb30/Ycf12, at least 3 peripheral proteins of the oxygen-evolving complex and a large number of cofactors. It forms dimeric complexes. The cofactor is heme b.

The protein localises to the plastid. Its subcellular location is the chloroplast thylakoid membrane. This b-type cytochrome is tightly associated with the reaction center of photosystem II (PSII). PSII is a light-driven water:plastoquinone oxidoreductase that uses light energy to abstract electrons from H(2)O, generating O(2) and a proton gradient subsequently used for ATP formation. It consists of a core antenna complex that captures photons, and an electron transfer chain that converts photonic excitation into a charge separation. In Ostreococcus tauri, this protein is Cytochrome b559 subunit alpha.